The primary structure comprises 85 residues: Exodeoxyribonuclease 7 small subunit (85 aa).

The protein belongs to the XseB family. As to quaternary structure, heterooligomer composed of large and small subunits.

The protein localises to the cytoplasm. It catalyses the reaction Exonucleolytic cleavage in either 5'- to 3'- or 3'- to 5'-direction to yield nucleoside 5'-phosphates.. Functionally, bidirectionally degrades single-stranded DNA into large acid-insoluble oligonucleotides, which are then degraded further into small acid-soluble oligonucleotides. This Mycobacterium bovis (strain ATCC BAA-935 / AF2122/97) protein is Exodeoxyribonuclease 7 small subunit.